Here is a 365-residue protein sequence, read N- to C-terminus: WAT1-related protein At4g01440 (365 aa).

The next 10 helical transmembrane spans lie at 8-28, 40-60, 72-92, 101-121, 132-152, 181-201, 213-233, 249-269, 277-297, and 302-322; these read WTPV…NALV, VIAT…AFFW, ILVQ…YFFL, TLAC…ALIF, AGMG…LLTM, WIIG…WMLI, YSST…LSLI, IVTI…GTSW, IFTS…DFLI, and IFLG…IFLL. EamA domains are found at residues 25–144 and 196–321; these read NALV…LICI and GSWM…YIFL.

It belongs to the drug/metabolite transporter (DMT) superfamily. Plant drug/metabolite exporter (P-DME) (TC 2.A.7.4) family.

Its subcellular location is the membrane. The polypeptide is WAT1-related protein At4g01440 (Arabidopsis thaliana (Mouse-ear cress)).